Consider the following 205-residue polypeptide: Pyridoxal 5'-phosphate synthase subunit PdxT (205 aa).

Position 54–56 (54–56 (GES)) interacts with L-glutamine. The active-site Nucleophile is the Cys86. L-glutamine is bound by residues Arg118 and 147–148 (IR). Residues His183 and Glu185 each act as charge relay system in the active site.

The protein belongs to the glutaminase PdxT/SNO family. As to quaternary structure, in the presence of PdxS, forms a dodecamer of heterodimers. Only shows activity in the heterodimer.

The catalysed reaction is aldehydo-D-ribose 5-phosphate + D-glyceraldehyde 3-phosphate + L-glutamine = pyridoxal 5'-phosphate + L-glutamate + phosphate + 3 H2O + H(+). It carries out the reaction L-glutamine + H2O = L-glutamate + NH4(+). It functions in the pathway cofactor biosynthesis; pyridoxal 5'-phosphate biosynthesis. Functionally, catalyzes the hydrolysis of glutamine to glutamate and ammonia as part of the biosynthesis of pyridoxal 5'-phosphate. The resulting ammonia molecule is channeled to the active site of PdxS. In Nitrosopumilus maritimus (strain SCM1), this protein is Pyridoxal 5'-phosphate synthase subunit PdxT.